Here is a 642-residue protein sequence, read N- to C-terminus: Mini-chromosome maintenance complex-binding protein (642 aa).

Over residues 151–161 (ARVSPSTSYTP) the composition is skewed to polar residues. Residues 151–197 (ARVSPSTSYTPSRHKRSYEDDDDMDLQPNKQKDQHAGARQAGSVGGL) form a disordered region. Serine 154 is modified (phosphoserine). Position 160 is a phosphothreonine (threonine 160). A phosphoserine mark is found at serine 167 and serine 298.

This sequence belongs to the MCMBP family. As to quaternary structure, interacts with the MCM complex: associates with the MCM3-7 complex which lacks MCM2, while it does not interact with the MCM complex when MCM2 is present (MCM2-7 complex). Interacts with the RPA complex, when composed of all RPA1, RPA2 and RPA3 components, but not with RPA1 or RPA2 alone.

The protein localises to the nucleus. Its function is as follows. Associated component of the MCM complex that acts as a regulator of DNA replication. Binds to the MCM complex during late S phase and promotes the disassembly of the MCM complex from chromatin, thereby acting as a key regulator of pre-replication complex (pre-RC) unloading from replicated DNA. Can dissociate the MCM complex without addition of ATP; probably acts by destabilizing interactions of each individual subunits of the MCM complex. Required for sister chromatid cohesion. In Homo sapiens (Human), this protein is Mini-chromosome maintenance complex-binding protein (MCMBP).